Consider the following 522-residue polypeptide: Leucine-rich repeat transmembrane neuronal protein 1 (522 aa).

Residues 1–34 form the signal peptide; it reads MDFLLLGLCLHWLLRRPSGVVLCLLGACFQMLPA. The region spanning 35-63 is the LRRNT domain; it reads APSGCPGQCRCEGRLLYCEALNLTEAPHN. Topologically, residues 35–427 are extracellular; it reads APSGCPGQCR…HAENAVQIHK (393 aa). N-linked (GlcNAc...) asparagine glycosylation is found at N56 and N63. 10 LRR repeats span residues 64–87, 89–111, 112–135, 136–159, 161–183, 184–207, 209–231, 233–255, 256–278, and 280–302; these read LSGLLGLSLRYNSLSELRAGQFTG, MQLTWLYLDHNHICSVQGDAFQK, LRRVKELTLSSNQITELANTTFRP, MPNLRSVDLSYNKLQALAPDLFHG, RKLTTLHMRANAIQFVPVRIFQD, CRSLKFLDIGYNQLKSLARNSFAG, FKLTELHLEHNDLIKVNFAHFPR, ISLHSLCLRRNKVAIVVSSLDWV, WNLEKMDLSGNEIEYMEPHVFET, and PYLQTLQLDSNRLTYIEPRILNS. A glycan (N-linked (GlcNAc...) asparagine) is linked at N130. The LRRCT domain maps to 314 to 365; it reads NLWDCGRNVCALASWLSNFQGRYDANLQCASPEYAQGEDVLDAVYAFHLCED. An N-linked (GlcNAc...) asparagine glycan is attached at N381. A helical membrane pass occupies residues 428-448; that stretch reads VVTGTMALIFSFLIVVLVLYV. Residues 449–522 lie on the Cytoplasmic side of the membrane; the sequence is SWKCFPASLR…HQQPARECEV (74 aa).

The protein belongs to the LRRTM family. In terms of tissue distribution, expressed predominantly in the nervous system by postmitotic neurons, but also in some non-neuronal tissues. In adult brain expression is most prominent in the forebraain, particularly in the thalamus and in the cortical areas including hippocampus, piriform and posterior cingulate.

It is found in the cell membrane. The protein localises to the postsynaptic cell membrane. In terms of biological role, exhibits strong synaptogenic activity, restricted to excitatory presynaptic differentiation, acting at both pre- and postsynaptic level. The protein is Leucine-rich repeat transmembrane neuronal protein 1 (Lrrtm1) of Mus musculus (Mouse).